The sequence spans 504 residues: Kinesin light chain 3 (504 aa).

Residues 90–150 are a coiled coil; it reads ALSAHVGALE…EEEKRHLEFL (61 aa). A disordered region spans residues 153-197; it reads LRQYDPPAESQQSESPPRRDSLASLFPSEEEERKGPEAAGAAAAQ. Residues 158–167 are compositionally biased toward low complexity; that stretch reads PPAESQQSES. Ser173 is subject to Phosphoserine. TPR repeat units lie at residues 207 to 240, 249 to 282, 291 to 324, 333 to 366, and 375 to 408; these read LRTL…LERS, ATML…REQT, AATL…REKV, AKQL…YEAL, and AKTK…EDLP. Residues 411 to 438 are disordered; that stretch reads LGAPNTGTAGDAEQALRRSSSLSKIRES. The residue at position 466 (Ser466) is a Phosphoserine. The disordered stretch occupies residues 472–504; that stretch reads VDAPRAPGTQFPSWHLDKAPRTLSASTQDLSPH. The segment covering 494-504 has biased composition (polar residues); it reads LSASTQDLSPH. Thr498 carries the phosphothreonine modification. Ser502 is modified (phosphoserine).

The protein belongs to the kinesin light chain family. As to quaternary structure, oligomer composed of two heavy chains and two light chains. Associates with microtubulin in an ATP-dependent manner. Interacts with KIF5C. Interacts with ODF1. Interacts with LRGUK. Interacts with VDAC2.

It localises to the cytoplasm. The protein localises to the cytoskeleton. The protein resides in the mitochondrion. Kinesin is a microtubule-associated force-producing protein that may play a role in organelle transport. Plays a role during spermiogenesis in the development of the sperm tail midpiece and in the normal function of spermatozoa. May play a role in the formation of the mitochondrial sheath formation in the developing spermatid midpiece. This is Kinesin light chain 3 (KLC3) from Homo sapiens (Human).